The following is a 413-amino-acid chain: Cardiolipin synthase B (413 aa).

PLD phosphodiesterase domains lie at V108–H135 and R285–S312. Active-site residues include H113, K115, D120, H290, K292, and D297. The segment at V390–P413 is disordered.

This sequence belongs to the phospholipase D family. Cardiolipin synthase subfamily. ClsB sub-subfamily.

The protein resides in the cell membrane. It carries out the reaction 2 a 1,2-diacyl-sn-glycero-3-phospho-(1'-sn-glycerol) = a cardiolipin + glycerol. Its function is as follows. Catalyzes the phosphatidyl group transfer from one phosphatidylglycerol molecule to another to form cardiolipin (CL) (diphosphatidylglycerol) and glycerol. This Escherichia coli O6:H1 (strain CFT073 / ATCC 700928 / UPEC) protein is Cardiolipin synthase B.